The primary structure comprises 530 residues: Bifunctional purine biosynthesis protein PurH (530 aa).

The region spanning 1-148 (MENSRPIKRA…KNHKDVGIVV (148 aa)) is the MGS-like domain.

This sequence belongs to the PurH family.

It carries out the reaction (6R)-10-formyltetrahydrofolate + 5-amino-1-(5-phospho-beta-D-ribosyl)imidazole-4-carboxamide = 5-formamido-1-(5-phospho-D-ribosyl)imidazole-4-carboxamide + (6S)-5,6,7,8-tetrahydrofolate. It catalyses the reaction IMP + H2O = 5-formamido-1-(5-phospho-D-ribosyl)imidazole-4-carboxamide. It functions in the pathway purine metabolism; IMP biosynthesis via de novo pathway; 5-formamido-1-(5-phospho-D-ribosyl)imidazole-4-carboxamide from 5-amino-1-(5-phospho-D-ribosyl)imidazole-4-carboxamide (10-formyl THF route): step 1/1. Its pathway is purine metabolism; IMP biosynthesis via de novo pathway; IMP from 5-formamido-1-(5-phospho-D-ribosyl)imidazole-4-carboxamide: step 1/1. This Psychromonas ingrahamii (strain DSM 17664 / CCUG 51855 / 37) protein is Bifunctional purine biosynthesis protein PurH.